A 1167-amino-acid chain; its full sequence is ATP-dependent helicase/deoxyribonuclease subunit B (1167 aa).

Residues 1 to 359 (MSLRFLLGRS…IRQTEAYRDL (359 aa)) enclose the UvrD-like helicase ATP-binding domain. 8–15 (GRSGSGKT) contacts ATP. The region spanning 282–588 (ANRRHEDRAL…EFSLVPPAMD (307 aa)) is the UvrD-like helicase C-terminal domain. [4Fe-4S] cluster is bound by residues C804, C1126, C1129, and C1135.

It belongs to the helicase family. AddB/RexB type 1 subfamily. Heterodimer of AddA and AddB. It depends on Mg(2+) as a cofactor. The cofactor is [4Fe-4S] cluster.

Its function is as follows. The heterodimer acts as both an ATP-dependent DNA helicase and an ATP-dependent, dual-direction single-stranded exonuclease. Recognizes the chi site generating a DNA molecule suitable for the initiation of homologous recombination. The AddB subunit has 5' -&gt; 3' nuclease activity but not helicase activity. The polypeptide is ATP-dependent helicase/deoxyribonuclease subunit B (Geobacillus kaustophilus (strain HTA426)).